Consider the following 236-residue polypeptide: Leucyl/phenylalanyl-tRNA--protein transferase (236 aa).

This sequence belongs to the L/F-transferase family.

The protein resides in the cytoplasm. It catalyses the reaction N-terminal L-lysyl-[protein] + L-leucyl-tRNA(Leu) = N-terminal L-leucyl-L-lysyl-[protein] + tRNA(Leu) + H(+). It carries out the reaction N-terminal L-arginyl-[protein] + L-leucyl-tRNA(Leu) = N-terminal L-leucyl-L-arginyl-[protein] + tRNA(Leu) + H(+). The catalysed reaction is L-phenylalanyl-tRNA(Phe) + an N-terminal L-alpha-aminoacyl-[protein] = an N-terminal L-phenylalanyl-L-alpha-aminoacyl-[protein] + tRNA(Phe). Functionally, functions in the N-end rule pathway of protein degradation where it conjugates Leu, Phe and, less efficiently, Met from aminoacyl-tRNAs to the N-termini of proteins containing an N-terminal arginine or lysine. The polypeptide is Leucyl/phenylalanyl-tRNA--protein transferase (Shewanella putrefaciens (strain CN-32 / ATCC BAA-453)).